The primary structure comprises 276 residues: Molybdenum storage protein subunit alpha (276 aa).

As to quaternary structure, octamer consisting of 4 alpha and 4 beta chains.

Its subcellular location is the cytoplasm. In terms of biological role, intracellular storage of molybdenum. Binds polyoxomolybdates. Can bind at least 90 molybdenum atoms per protein molecule. The protein is Molybdenum storage protein subunit alpha of Azotobacter vinelandii (strain DJ / ATCC BAA-1303).